Reading from the N-terminus, the 111-residue chain is Large ribosomal subunit protein uL22 (111 aa).

This sequence belongs to the universal ribosomal protein uL22 family. Part of the 50S ribosomal subunit.

In terms of biological role, this protein binds specifically to 23S rRNA; its binding is stimulated by other ribosomal proteins, e.g. L4, L17, and L20. It is important during the early stages of 50S assembly. It makes multiple contacts with different domains of the 23S rRNA in the assembled 50S subunit and ribosome. The globular domain of the protein is located near the polypeptide exit tunnel on the outside of the subunit, while an extended beta-hairpin is found that lines the wall of the exit tunnel in the center of the 70S ribosome. The protein is Large ribosomal subunit protein uL22 of Chlamydia caviae (strain ATCC VR-813 / DSM 19441 / 03DC25 / GPIC) (Chlamydophila caviae).